Here is an 837-residue protein sequence, read N- to C-terminus: Putative dimethyl sulfoxide reductase catalytic subunit A (837 aa).

Positions 1 to 36 form a signal peptide, tat-type signal; that stretch reads MSDTDLNATRRDVLKSGAVAAVGLSGGGLLSTLQEA. The region spanning 53–110 is the 4Fe-4S Mo/W bis-MGD-type domain; that stretch reads DQVVKTACSPNCRGKCPLDVFVRDGQIKKVEQQVPAAKTFKRGCTLGMTHLQRVYNAD. [4Fe-4S] cluster is bound by residues C60, C64, C68, and C96. Residue N200 participates in Mo-bis(molybdopterin guanine dinucleotide) binding. The disordered stretch occupies residues 813–837; sequence EHQSNEYTQHNPRGSSGTATDGDSS. A compositionally biased stretch (low complexity) spans 826–837; it reads GSSGTATDGDSS.

Belongs to the prokaryotic molybdopterin-containing oxidoreductase family. In terms of assembly, probable multiprotein complex that likely consists of DmsA, DmsB and DmsC. Mo-bis(molybdopterin guanine dinucleotide) serves as cofactor. The cofactor is [4Fe-4S] cluster. Predicted to be exported by the Tat system. The position of the signal peptide cleavage has not been experimentally proven.

The protein localises to the cell membrane. The catalysed reaction is dimethyl sulfide + a menaquinone + H2O = dimethyl sulfoxide + a menaquinol. Dimethyl sulfoxide (DMSO) reductase catalyzes the reduction of dimethyl sulfoxide (DMSO) to dimethyl sulfide (DMS) during anaerobic respiration; it can also use trimethylamine N-oxide (TMAO) as terminal electron acceptor. Required for anaerobic respiration on DMSO and TMAO; subunit A is proposed to be catalytically active. This chain is Putative dimethyl sulfoxide reductase catalytic subunit A (dmsA), found in Halobacterium salinarum (strain ATCC 700922 / JCM 11081 / NRC-1) (Halobacterium halobium).